A 289-amino-acid chain; its full sequence is ATP synthase gamma chain (289 aa).

Belongs to the ATPase gamma chain family. As to quaternary structure, F-type ATPases have 2 components, CF(1) - the catalytic core - and CF(0) - the membrane proton channel. CF(1) has five subunits: alpha(3), beta(3), gamma(1), delta(1), epsilon(1). CF(0) has three main subunits: a, b and c.

It is found in the cell inner membrane. In terms of biological role, produces ATP from ADP in the presence of a proton gradient across the membrane. The gamma chain is believed to be important in regulating ATPase activity and the flow of protons through the CF(0) complex. This chain is ATP synthase gamma chain, found in Nitrosococcus oceani (strain ATCC 19707 / BCRC 17464 / JCM 30415 / NCIMB 11848 / C-107).